Consider the following 379-residue polypeptide: Cyclic dinucleotide synthase CdnE (379 aa).

The UTP site is built by Q107, S109, D123, and K179. D123 is a binding site for Mg(2+). D193 is a Mg(2+) binding site. UTP contacts are provided by N229, K257, and S274. The Pyrimidine specificity motif (R/Q)xW in donor pocket motif lies at 328-330; that stretch reads KIF.

It belongs to the CD-NTase family. E02 subfamily. Requires Mg(2+) as cofactor.

The catalysed reaction is 2 UTP = c-di-UMP + 2 diphosphate. It carries out the reaction UTP + ATP = 3',3'-cUAMP + 2 diphosphate. The enzyme catalyses UTP + CTP = cyclic CMP-UMP + 2 diphosphate. In terms of biological role, cyclic nucleotide synthase (second messenger synthase) of a CBASS antivirus system. CBASS (cyclic oligonucleotide-based antiphage signaling system) provides immunity against bacteriophage. The CD-NTase protein synthesizes cyclic nucleotides in response to infection; these serve as specific second messenger signals. The signals activate a diverse range of effectors, leading to bacterial cell death and thus abortive phage infection. The effector protein for this system is membrane protein Cap15. A type I-B(UU) CBASS system. Its function is as follows. Cyclic dinucleotide synthase that preferentially catalyzes the synthesis of 3',3'-cyclic UMP-UMP (c-di-UMP) and 3',3'-cyclic UMP-AMP, with minor amounts of 3',3'-cyclic UMP-CMP, which are second messengers for cell signal transduction. Functionally, protects E.coli against phage infection. When the CBASS operon (cap15-cdnE) is introduced in E.coli MG1655 it protects against phages T2, T4, T5, T6, SECPhi4, SECPhi6, SECPhi17, SECPhi18 and SECPhi27, but not against phage T7. This chain is Cyclic dinucleotide synthase CdnE, found in Yersinia aleksiciae.